The sequence spans 286 residues: Shikimate dehydrogenase (NADP(+)) (286 aa).

Shikimate is bound by residues serine 20 to serine 22 and threonine 67. Catalysis depends on lysine 71, which acts as the Proton acceptor. 2 residues coordinate shikimate: asparagine 92 and aspartate 107. NADP(+) contacts are provided by residues glycine 132–alanine 136 and methionine 228. Shikimate is bound at residue tyrosine 230. An NADP(+)-binding site is contributed by glycine 251.

The protein belongs to the shikimate dehydrogenase family. In terms of assembly, homodimer.

It carries out the reaction shikimate + NADP(+) = 3-dehydroshikimate + NADPH + H(+). The protein operates within metabolic intermediate biosynthesis; chorismate biosynthesis; chorismate from D-erythrose 4-phosphate and phosphoenolpyruvate: step 4/7. In terms of biological role, involved in the biosynthesis of the chorismate, which leads to the biosynthesis of aromatic amino acids. Catalyzes the reversible NADPH linked reduction of 3-dehydroshikimate (DHSA) to yield shikimate (SA). This is Shikimate dehydrogenase (NADP(+)) from Geobacter sulfurreducens (strain ATCC 51573 / DSM 12127 / PCA).